The following is a 328-amino-acid chain: Acetaldehyde dehydrogenase 3 (328 aa).

Serine 17–isoleucine 20 lines the NAD(+) pocket. Residue cysteine 135 is the Acyl-thioester intermediate of the active site. Residues serine 166–asparagine 174 and asparagine 298 each bind NAD(+).

This sequence belongs to the acetaldehyde dehydrogenase family.

The enzyme catalyses acetaldehyde + NAD(+) + CoA = acetyl-CoA + NADH + H(+). This chain is Acetaldehyde dehydrogenase 3, found in Nocardia farcinica (strain IFM 10152).